The following is a 333-amino-acid chain: PDZ domain-containing protein GIPC1 (333 aa).

A compositionally biased stretch (basic residues) spans 1–11 (MPLGLGRRKKA). The interval 1 to 55 (MPLGLGRRKKAPPLVENEEAEPSRSGLGVGEPGPLGGSGAGESQMGLPPPPASLR) is disordered. Gly residues predominate over residues 27-40 (LGVGEPGPLGGSGA). A Phosphoserine modification is found at Ser68. The PDZ domain occupies 133 to 213 (EVEVFKSEDA…GRTFTLKLTE (81 aa)). The interval 221 to 244 (ISQRSSGGHPGSGPQLGTGRGTLR) is disordered. Phosphoserine is present on residues Ser222, Ser225, and Ser232. Residues 228 to 240 (GHPGSGPQLGTGR) are compositionally biased toward gly residues. Thr242 carries the phosphothreonine modification. Ser247 carries the post-translational modification Phosphoserine.

Belongs to the GIPC family. In terms of assembly, interacts with SDC4/syndecan-4 and SEMA4C/semaphorin-4C. Interacts with RGS19 (C-terminus), GLUT1 (C-terminus), ACTN1, KIF1B, MYO6 and PLEKHG5. Widely expressed.

The protein localises to the cytoplasm. It localises to the membrane. Its function is as follows. May be involved in G protein-linked signaling. This chain is PDZ domain-containing protein GIPC1 (Gipc1), found in Rattus norvegicus (Rat).